A 353-amino-acid chain; its full sequence is Photosystem II D2 protein (353 aa).

Threonine 2 carries the post-translational modification N-acetylthreonine. At threonine 2 the chain carries Phosphothreonine. Residues 41 to 61 (CAYFALGGWFTGTTFVTSWYT) form a helical membrane-spanning segment. Residue histidine 118 coordinates chlorophyll a. Residues 125 to 141 (GFMLRQFELARSVQLRP) traverse the membrane as a helical segment. Pheophytin a is bound by residues glutamine 130 and asparagine 143. Residues 153–166 (VFVSVFLIYPLGQS) traverse the membrane as a helical segment. Histidine 198 serves as a coordination point for chlorophyll a. Residues 208–228 (AALLCAIHGATVENTLFEDGD) form a helical membrane-spanning segment. A plastoquinone contacts are provided by histidine 215 and phenylalanine 262. Histidine 215 contacts Fe cation. Residue histidine 269 coordinates Fe cation. Residues 279–295 (GLWMSALGVVGLALNLR) traverse the membrane as a helical segment.

Belongs to the reaction center PufL/M/PsbA/D family. As to quaternary structure, PSII is composed of 1 copy each of membrane proteins PsbA, PsbB, PsbC, PsbD, PsbE, PsbF, PsbH, PsbI, PsbJ, PsbK, PsbL, PsbM, PsbT, PsbX, PsbY, PsbZ, Psb30/Ycf12, at least 3 peripheral proteins of the oxygen-evolving complex and a large number of cofactors. It forms dimeric complexes. The cofactor is The D1/D2 heterodimer binds P680, chlorophylls that are the primary electron donor of PSII, and subsequent electron acceptors. It shares a non-heme iron and each subunit binds pheophytin, quinone, additional chlorophylls, carotenoids and lipids. There is also a Cl(-1) ion associated with D1 and D2, which is required for oxygen evolution. The PSII complex binds additional chlorophylls, carotenoids and specific lipids..

Its subcellular location is the plastid. It localises to the chloroplast thylakoid membrane. It catalyses the reaction 2 a plastoquinone + 4 hnu + 2 H2O = 2 a plastoquinol + O2. Functionally, photosystem II (PSII) is a light-driven water:plastoquinone oxidoreductase that uses light energy to abstract electrons from H(2)O, generating O(2) and a proton gradient subsequently used for ATP formation. It consists of a core antenna complex that captures photons, and an electron transfer chain that converts photonic excitation into a charge separation. The D1/D2 (PsbA/PsbD) reaction center heterodimer binds P680, the primary electron donor of PSII as well as several subsequent electron acceptors. D2 is needed for assembly of a stable PSII complex. The polypeptide is Photosystem II D2 protein (Coffea arabica (Arabian coffee)).